Reading from the N-terminus, the 75-residue chain is Dermaseptin-DA2 (75 aa).

The first 22 residues, 1 to 22 (MALVKKSLFLVLFLGLVSLSIC), serve as a signal peptide directing secretion. The propeptide occupies 23–42 (EEKRENEDEEEQEDDEQSEE).

It belongs to the frog skin active peptide (FSAP) family. Dermaseptin subfamily. As to expression, expressed by the skin glands.

Its subcellular location is the secreted. In terms of biological role, possesses a potent antimicrobial activity against Gram-positive and Gram-negative bacteria. Probably acts by disturbing membrane functions with its amphipathic structure. The sequence is that of Dermaseptin-DA2 from Agalychnis dacnicolor (Giant Mexican leaf frog).